Reading from the N-terminus, the 191-residue chain is MEYFDIRKMPVNLWRNGAGETREICCFPPATRDFHWRASIASIATNGEFARFPGMERVVTLLEGGEIHLESTDSFSHTLKQLQPFAFSGEQIVKAQLNEGQMSMDFNIMTRCNSCKAKVRIADRTFTTFGSRGGVVFVISGIWQLGDKVLTTDQGACWYDGKHTLRLLQSTGKLLFSEINWLPGYSPDQVQ.

This sequence belongs to the Ves family.

This is Protein Ves from Escherichia fergusonii (strain ATCC 35469 / DSM 13698 / CCUG 18766 / IAM 14443 / JCM 21226 / LMG 7866 / NBRC 102419 / NCTC 12128 / CDC 0568-73).